A 124-amino-acid chain; its full sequence is Late histone H2B.2.2 (124 aa).

The disordered stretch occupies residues 1–32 (MPAKQTSGKGAKKAGKAKGRPSGASKTRRRKR). Basic residues predominate over residues 10 to 19 (GAKKAGKAKG). S111 carries an O-linked (GlcNAc) serine glycan. Residue K119 forms a Glycyl lysine isopeptide (Lys-Gly) (interchain with G-Cter in ubiquitin) linkage.

This sequence belongs to the histone H2B family. In terms of assembly, the nucleosome is a histone octamer containing two molecules each of H2A, H2B, H3 and H4 assembled in one H3-H4 heterotetramer and two H2A-H2B heterodimers. The octamer wraps approximately 147 bp of DNA. Post-translationally, monoubiquitination of Lys-119 gives a specific tag for epigenetic transcriptional activation and is also prerequisite for histone H3 'Lys-4' and 'Lys-79' methylation. GlcNAcylation at Ser-111 promotes monoubiquitination of Lys-119. It fluctuates in response to extracellular glucose, and associates with transcribed genes.

The protein resides in the nucleus. It localises to the chromosome. Its function is as follows. Core component of nucleosome. Nucleosomes wrap and compact DNA into chromatin, limiting DNA accessibility to the cellular machineries which require DNA as a template. Histones thereby play a central role in transcription regulation, DNA repair, DNA replication and chromosomal stability. DNA accessibility is regulated via a complex set of post-translational modifications of histones, also called histone code, and nucleosome remodeling. This chain is Late histone H2B.2.2, found in Psammechinus miliaris (Green sea urchin).